A 210-amino-acid chain; its full sequence is Protein GET1 (210 aa).

Residues 1–4 are Lumenal-facing; it reads MASL. The helical transmembrane segment at 5-24 threads the bilayer; sequence LIIVFLSHVVTYLINTIGAT. The Cytoplasmic segment spans residues 25-110; sequence TVDNLLWLLY…SFDLTVKSVR (86 aa). A coiled-coil region spans residues 43-97; it reads RTAVEQRRLKGEVVQLKREMKSTSSQDEFAKWAKLRRRHDKAMEEYEAKNKALGK. A helical transmembrane segment spans residues 111–131; that stretch reads FFSTTGLKFFLQFWYSKTPMF. The Lumenal portion of the chain corresponds to 132–155; it reads ELPRGWVPWQVEWVLSFPRAPLGT. A helical transmembrane segment spans residues 156–172; the sequence is VSIQVWSGVCTTVVSLA. The Cytoplasmic portion of the chain corresponds to 173–210; it reads GDALGVVIQSLILKMTKRGVARTSEGRPSQPMALKKEL.

This sequence belongs to the WRB/GET1 family. As to quaternary structure, interacts with GET3.

Its subcellular location is the endoplasmic reticulum membrane. Functionally, required for the post-translational delivery of tail-anchored (TA) proteins to the endoplasmic reticulum. Acts as a membrane receptor for soluble GET3, which recognizes and selectively binds the transmembrane domain of TA proteins in the cytosol. In Uncinocarpus reesii (strain UAMH 1704), this protein is Protein GET1.